A 241-amino-acid chain; its full sequence is 2,3-bisphosphoglycerate-dependent phosphoglycerate mutase (241 aa).

His-12 serves as the catalytic Tele-phosphohistidine intermediate. Residues 24 to 25, Arg-61, 117 to 120, and Lys-128 contribute to the substrate site; these read SG and ERYY. The active-site Proton donor/acceptor is the Glu-117.

It belongs to the phosphoglycerate mutase family. BPG-dependent PGAM subfamily.

The catalysed reaction is (2R)-2-phosphoglycerate = (2R)-3-phosphoglycerate. Its pathway is carbohydrate degradation; glycolysis; pyruvate from D-glyceraldehyde 3-phosphate: step 3/5. In terms of biological role, catalyzes the interconversion of 2-phosphoglycerate and 3-phosphoglycerate. This Methanosarcina mazei (strain ATCC BAA-159 / DSM 3647 / Goe1 / Go1 / JCM 11833 / OCM 88) (Methanosarcina frisia) protein is 2,3-bisphosphoglycerate-dependent phosphoglycerate mutase.